A 461-amino-acid chain; its full sequence is Cysteine--tRNA ligase (461 aa).

Zn(2+) is bound at residue C28. The 'HIGH' region signature appears at 30–40 (ITVYDLCHIGH). Zn(2+)-binding residues include C209, H234, and E238. Positions 266-270 (KMSKS) match the 'KMSKS' region motif. K269 serves as a coordination point for ATP.

Belongs to the class-I aminoacyl-tRNA synthetase family. In terms of assembly, monomer. It depends on Zn(2+) as a cofactor.

The protein localises to the cytoplasm. It carries out the reaction tRNA(Cys) + L-cysteine + ATP = L-cysteinyl-tRNA(Cys) + AMP + diphosphate. The protein is Cysteine--tRNA ligase of Escherichia fergusonii (strain ATCC 35469 / DSM 13698 / CCUG 18766 / IAM 14443 / JCM 21226 / LMG 7866 / NBRC 102419 / NCTC 12128 / CDC 0568-73).